We begin with the raw amino-acid sequence, 207 residues long: Alpha-1-acid glycoprotein 2 (207 aa).

An N-terminal signal peptide occupies residues 1-18; sequence MALHMILVMVSLLPLLEA. Glutamine 19 carries the pyrrolidone carboxylic acid modification. N-linked (GlcNAc...) asparagine glycosylation is found at asparagine 25, asparagine 34, asparagine 76, asparagine 94, and asparagine 104. The cysteines at positions 91 and 184 are disulfide-linked. The tract at residues 188 to 207 is disordered; sequence EKQQLELEKETKKDPEEGQA.

The protein belongs to the calycin superfamily. Lipocalin family. In terms of tissue distribution, expressed by the liver and secreted in plasma.

The protein localises to the secreted. Functions as a transport protein in the blood stream. Binds various ligands in the interior of its beta-barrel domain. Appears to function in modulating the activity of the immune system during the acute-phase reaction. This chain is Alpha-1-acid glycoprotein 2 (Orm2), found in Mus musculus (Mouse).